The chain runs to 1083 residues: MSDYFTFPKQENGGISKQPATPGSTRSSSRNLELPKNYRSFGGSSDELASMYSADSQYLMDMIPDSLTLKNEPASGNTQMNGPDGKENKDIKLDEYILPKTDPRSPYYINMPIPKKLPKSEGKARAKQKVNRADPSDLDVENIYETSGEFVREYPTDILIDRFHKWKKILKSLIAYFREAAYSQEQIARINYQMKNAVKFAFLTDLEDETNKLVDPSISKLPTKKPQPVPLAAQKLDSKYDTDVEQPQSIQSVPSEEVASASSGFMKFGSGSIQDIQVILKKYHLSLGSQQYKISKEILAYIIPKLTDLRKDLTTKMKEIKELNGDFKTNIGEHIKITSRLLNKYIASVKLLDEASTSGDKQGEKLKPKHDPYLLKLQLDLQLKRQLLEENYLREAFLNLQSAALQLEKIVYSKIQSALQRYSALIDSEARLMIKNLCHELQQGILSRPPAVEWDNFVSHHPTCLMNLKSTDPPPQPRRLSDIVYPNMKSPLAKCIRVGYLLKKTESSKSFTKGYFVLTTNYLHEFKSSDFFLDSKSPRSKNKPVVEQSDISRVNKDGTNAGSHPSSKGTQDPKLTKRRKGLSSSNLYPISSLSLNDCSLKDSTDSTFVLQGYASYHSPEDTCTKESSTTSDLACPTKTLASNKGKHQRTPSALSMVSVPKFLKSSSVPKEQKKAKEEANINKKSICEKRVEWTFKIFSASLEPTPEESKNFKKWVQDIKALTSFNSTQERSNFIEEKILKSRNHNNGKSSQRSKNSTYITPVDSFVNLSEKVTPSSSVTTLNTRKRANRPRYIDIPKSANMNAGAMNSVYRSKVNTPAIDENGNLAIVGETKNSAPQNGMSYTIRTPCKSPYSPYTGEGMLYNRSADNLMASSSRKASAPGEVPQIAVSNHGDEAIIPASAYSDSSHKSSRASSVASIHNQRVDFYPSPLMNLPGVSPSCLALDGNANGYFGIPLNCNSEARRGSDLSPFEMESPLFEENRTQNCSGSRKSSACHIPHQCGPRKEGNDSRLIYGNEKGASQSRLTLKEPLTSKGVEAPYSSLKKTYSAENVPLTSTVSNDKSLHSRKEGSTNTVPATSASSK.

Disordered regions lie at residues methionine 1 to aspartate 46 and leucine 69 to lysine 89. Residues glycine 13–asparagine 31 are compositionally biased toward polar residues. A phosphoserine mark is found at serine 136, serine 249, serine 252, serine 481, and serine 537. The PH domain occupies cysteine 495–serine 606. The disordered stretch occupies residues aspartate 534–leucine 582. Positions serine 549–threonine 570 are enriched in polar residues. 3 positions are modified to phosphoserine: serine 652, serine 765, and serine 813. Phosphothreonine is present on residues threonine 817 and threonine 857. 6 positions are modified to phosphoserine: serine 866, serine 879, serine 918, serine 966, serine 969, and serine 975. Positions glutamate 979–lysine 1083 are disordered. 3 stretches are compositionally biased toward polar residues: residues threonine 983–serine 992, leucine 1043–aspartate 1061, and serine 1071–lysine 1083. Phosphoserine is present on residues serine 1059, serine 1081, and serine 1082.

This sequence belongs to the RGC1 family.

The protein localises to the cytoplasm. In terms of biological role, positive regulator of FPS1 glycerol channel required for the glycerol efflux. The chain is Regulator of the glycerol channel 1 (RGC1) from Saccharomyces cerevisiae (strain ATCC 204508 / S288c) (Baker's yeast).